A 484-amino-acid chain; its full sequence is Tyramine receptor 1 (484 aa).

The Extracellular portion of the chain corresponds to Met1 to Thr54. Residue Asn13 is glycosylated (N-linked (GlcNAc...) asparagine). Residues Ala55–Phe77 traverse the membrane as a helical segment. Over Thr78–Asn87 the chain is Cytoplasmic. Residues Phe88–Val109 form a helical membrane-spanning segment. The Extracellular portion of the chain corresponds to Ala110–Met126. An intrachain disulfide couples Cys124 to Cys203. A helical transmembrane segment spans residues Trp127–Leu147. At Asp148–Arg167 the chain is on the cytoplasmic side. A helical transmembrane segment spans residues Val168–Trp190. Over Asn191–Ser215 the chain is Extracellular. Asn198 carries N-linked (GlcNAc...) asparagine glycosylation. A helical transmembrane segment spans residues Ser216–Ala237. Over Thr238–Thr411 the chain is Cytoplasmic. A compositionally biased stretch (polar residues) spans Ser253–Thr280. Disordered stretches follow at residues Ser253–Val322 and Thr358–Val383. Positions Glu295 to Lys306 are enriched in basic residues. Residues Ala361 to Ala378 show a composition bias toward polar residues. Residues Leu412–Val433 traverse the membrane as a helical segment. The Extracellular portion of the chain corresponds to Pro434 to Asn448. A helical transmembrane segment spans residues Phe449–Leu470. At Asp471–Thr484 the chain is on the cytoplasmic side.

Belongs to the G-protein coupled receptor 1 family. In terms of tissue distribution, present mainly in the central nervous system, especially in the supra- and subesophageal, thoracic and abdominal ganglia. Not found in the distal part of optic lobes.

It is found in the cell membrane. In terms of biological role, G-protein coupled receptor for tyramine, a known neurotransmitter and neuromodulator and direct precursor of octopamine. The rank order of potency for agonists of this receptor is tyramine &gt; naphazoline &gt; tolazoline &gt; DL-octopamine &gt; dopamine &gt; epinephrine &gt; 5-hydroxytryptamine. For antagonists, the rank order is yohimbine &gt; chlorpromazine &gt; mianserin &gt; phentolamine &gt; metoclopramide. The protein is Tyramine receptor 1 (GCR1) of Locusta migratoria (Migratory locust).